A 485-amino-acid polypeptide reads, in one-letter code: Maturase K (485 aa).

This sequence belongs to the intron maturase 2 family. MatK subfamily.

Its subcellular location is the plastid. The protein resides in the chloroplast. Its function is as follows. Usually encoded in the trnK tRNA gene intron. Probably assists in splicing its own and other chloroplast group II introns. The protein is Maturase K of Malus domestica (Apple).